The following is a 469-amino-acid chain: Glutamate--tRNA ligase (469 aa).

Residues 11–21 (PSPTGFIHLGN) carry the 'HIGH' region motif. A compositionally biased stretch (basic and acidic residues) spans 116–131 (ASGEKPRYDGTWRPEP). The segment at 116–139 (ASGEKPRYDGTWRPEPGKVLPTPP) is disordered. A 'KMSKS' region motif is present at residues 243 to 247 (KMSKR). ATP is bound at residue Lys246.

This sequence belongs to the class-I aminoacyl-tRNA synthetase family. Glutamate--tRNA ligase type 1 subfamily. Monomer.

It is found in the cytoplasm. The catalysed reaction is tRNA(Glu) + L-glutamate + ATP = L-glutamyl-tRNA(Glu) + AMP + diphosphate. Functionally, catalyzes the attachment of glutamate to tRNA(Glu) in a two-step reaction: glutamate is first activated by ATP to form Glu-AMP and then transferred to the acceptor end of tRNA(Glu). This is Glutamate--tRNA ligase from Paraburkholderia phymatum (strain DSM 17167 / CIP 108236 / LMG 21445 / STM815) (Burkholderia phymatum).